An 891-amino-acid chain; its full sequence is Targeting protein for Xklp2 homolog (891 aa).

The segment covering 42 to 54 (HENGVPLTFDDKA) has biased composition (basic and acidic residues). Disordered regions lie at residues 42–310 (HENG…KSCP), 418–454 (NLRKYVPSPSKPQGITKPRPFNFSDNRKRTHEESFSG), 472–518 (HTKT…NRHR), 723–746 (CSGVPDKKVKPPTQMAPFSVAEKG), and 789–891 (STKP…SHTS). Over residues 108–124 (DDVSSAESETCEMSTDS) the composition is skewed to polar residues. Residues 141–154 (DDEATVQESSDAEE) show a composition bias toward acidic residues. The segment covering 155 to 173 (TQTLPSSCVDSSTAEMSTD) has biased composition (polar residues). A compositionally biased stretch (basic residues) spans 236 to 246 (PTRKSPRLHSR). Residues 442–454 (DNRKRTHEESFSG) show a composition bias toward basic and acidic residues. Residues 791–802 (KPMTDISNFSLN) show a composition bias toward polar residues. Basic and acidic residues-rich tracts occupy residues 803–822 (TERRAEDRKGYEQAKYERQL) and 831–852 (REAEKEEELRQQISKQRADSIH).

This sequence belongs to the TPX2 family. In terms of tissue distribution, detectable in immature oocytes.

The protein localises to the nucleus. It is found in the cytoplasm. The protein resides in the cytoskeleton. It localises to the spindle. Its function is as follows. Spindle assembly factor. Required for normal assembly of mitotic spindles. The polypeptide is Targeting protein for Xklp2 homolog (Patiria pectinifera (Starfish)).